The following is a 223-amino-acid chain: Noggin (223 aa).

Residues 1-26 form the signal peptide; the sequence is MDHSQCLVTIYAAAVLLGLRLQQGSC. N61 is a glycosylation site (N-linked (GlcNAc...) asparagine). Intrachain disulfides connect C146-C183, C169-C219, C175-C221, and C198-C206.

Belongs to the noggin family. As to quaternary structure, homodimer.

It is found in the secreted. In terms of biological role, inhibitor of bone morphogenetic proteins (BMP) signaling. Controls somitogenesis by sequestering the BMP-4 activity which in turn differentiates distinct subtypes of the mesoderm along the mediolateral axis. This is Noggin (NOG) from Gallus gallus (Chicken).